A 456-amino-acid chain; its full sequence is Major facilitator superfamily domain-containing protein 10 (456 aa).

Helical transmembrane passes span 25 to 45 (VVAV…LLLP), 87 to 107 (VLFG…SAPL), 125 to 145 (LAGV…AAFL), 149 to 169 (VIGG…ADLG), 179 to 199 (AVIG…GAFL), 204 to 224 (VPWL…CFLP), 278 to 298 (LVYF…SFLV), 311 to 328 (KMFF…GAYA), 343 to 363 (AILL…LPIL), 365 to 385 (LGLL…SSVV), and 422 to 442 (LAGA…PFSI).

The protein belongs to the major facilitator superfamily.

It is found in the nucleus inner membrane. It localises to the cell membrane. Its function is as follows. Probable organic anion transporter which may serve as a transporter for some non-steroidal anti-inflammatory drugs (NSAIDs) as well as other organic anions across the luminal membranes of renal proximal tubules at the final excretion step into the urine. The chain is Major facilitator superfamily domain-containing protein 10 (MFSD10) from Bos taurus (Bovine).